A 1342-amino-acid polypeptide reads, in one-letter code: DNA-directed RNA polymerase subunit beta (1342 aa).

The protein belongs to the RNA polymerase beta chain family. The RNAP catalytic core consists of 2 alpha, 1 beta, 1 beta' and 1 omega subunit. When a sigma factor is associated with the core the holoenzyme is formed, which can initiate transcription.

It carries out the reaction RNA(n) + a ribonucleoside 5'-triphosphate = RNA(n+1) + diphosphate. DNA-dependent RNA polymerase catalyzes the transcription of DNA into RNA using the four ribonucleoside triphosphates as substrates. This is DNA-directed RNA polymerase subunit beta from Pectobacterium atrosepticum (strain SCRI 1043 / ATCC BAA-672) (Erwinia carotovora subsp. atroseptica).